Reading from the N-terminus, the 430-residue chain is DNA damage-inducible protein DIN7 (430 aa).

The tract at residues 1-96 (MGIPGLLPQL…HTETRRRKKR (96 aa)) is N-domain. 7 residues coordinate Mg(2+): Asp30, Asp78, Glu150, Asp152, Asp171, Asp173, and Asp227. Residues 114–247 (NAMEYFQKSV…VTAMKIVKRY (134 aa)) are I-domain.

Belongs to the XPG/RAD2 endonuclease family. Mg(2+) serves as cofactor.

It is found in the nucleus. Its function is as follows. 5'-&gt;3' double-stranded DNA exonuclease. The sequence is that of DNA damage-inducible protein DIN7 (DIN7) from Saccharomyces cerevisiae (strain ATCC 204508 / S288c) (Baker's yeast).